A 431-amino-acid chain; its full sequence is 5-methylthioadenosine/S-adenosylhomocysteine deaminase (431 aa).

Zn(2+)-binding residues include histidine 61 and histidine 63. Glutamate 90 and histidine 183 together coordinate substrate. A Zn(2+)-binding site is contributed by histidine 210. Residues glutamate 213 and aspartate 298 each contribute to the substrate site. Aspartate 298 is a Zn(2+) binding site.

It belongs to the metallo-dependent hydrolases superfamily. MTA/SAH deaminase family. It depends on Zn(2+) as a cofactor.

The catalysed reaction is S-adenosyl-L-homocysteine + H2O + H(+) = S-inosyl-L-homocysteine + NH4(+). It catalyses the reaction S-methyl-5'-thioadenosine + H2O + H(+) = S-methyl-5'-thioinosine + NH4(+). Functionally, catalyzes the deamination of 5-methylthioadenosine and S-adenosyl-L-homocysteine into 5-methylthioinosine and S-inosyl-L-homocysteine, respectively. Is also able to deaminate adenosine. This is 5-methylthioadenosine/S-adenosylhomocysteine deaminase from Halobacterium salinarum (strain ATCC 700922 / JCM 11081 / NRC-1) (Halobacterium halobium).